The sequence spans 421 residues: UDP-N-acetylglucosamine 1-carboxyvinyltransferase 1 (421 aa).

Residue 22-23 (KN) participates in phosphoenolpyruvate binding. Residue Arg-95 participates in UDP-N-acetyl-alpha-D-glucosamine binding. Cys-119 (proton donor) is an active-site residue. At Cys-119 the chain carries 2-(S-cysteinyl)pyruvic acid O-phosphothioketal. UDP-N-acetyl-alpha-D-glucosamine-binding positions include 124–128 (RPIEQ), Asp-308, and Val-330.

Belongs to the EPSP synthase family. MurA subfamily.

It is found in the cytoplasm. The enzyme catalyses phosphoenolpyruvate + UDP-N-acetyl-alpha-D-glucosamine = UDP-N-acetyl-3-O-(1-carboxyvinyl)-alpha-D-glucosamine + phosphate. The protein operates within cell wall biogenesis; peptidoglycan biosynthesis. Its function is as follows. Cell wall formation. Adds enolpyruvyl to UDP-N-acetylglucosamine. This is UDP-N-acetylglucosamine 1-carboxyvinyltransferase 1 from Staphylococcus aureus (strain MW2).